The chain runs to 432 residues: MADIIIKNAYVLTMDPDAGDLKNGTVVIEDGKITEIGENTKENADTVIDAKGSVVMPGLANTHTHAAMTLFRGYADDLQLAEWLEKHIWPAEAQLKAEDVYKGSLLACLEMIKSGTTSFADMYFYMDETAKAVEASGLRASLSHGLIELWNEEKGEADLKEGKRFVRAWQGAADGRIKTMYGPHAPNTCSEEFLTKVKEEAHRDGAGLHIHVLETEAELNAMKERYGKCSVHLLEDIGFFGPDVLAAHCVWLSDGDIEILRQREVNVSHNPISNMKLASGIAPVYKMLEKGVNVTLGTDGCASNNNLDLFEEIKTAALLHKVSTGNPTALPARQVLEMATVNGAKALGTETGMLKVGKKADMIVVDMKKPHLTPCFDVPSHLVYSAKGCDVRTTIVDGKVLMDNYRVLVMDEEKVIEEARTAAEELVARANA.

Positions 63 and 65 each coordinate Zn(2+). Positions 92 and 184 each coordinate substrate. A Zn(2+)-binding site is contributed by His-211. Substrate is bound by residues Glu-214 and Asp-299. Position 299 (Asp-299) interacts with Zn(2+).

It belongs to the metallo-dependent hydrolases superfamily. MTA/SAH deaminase family. In terms of assembly, homotetramer. It depends on Zn(2+) as a cofactor.

The catalysed reaction is 5'-deoxyadenosine + H2O + H(+) = 5'-deoxyinosine + NH4(+). It carries out the reaction S-adenosyl-L-homocysteine + H2O + H(+) = S-inosyl-L-homocysteine + NH4(+). It catalyses the reaction S-methyl-5'-thioadenosine + H2O + H(+) = S-methyl-5'-thioinosine + NH4(+). The enzyme catalyses adenosine + H2O + H(+) = inosine + NH4(+). Its pathway is amino-acid biosynthesis; S-adenosyl-L-methionine biosynthesis. In terms of biological role, catalyzes the deamination of three SAM-derived enzymatic products, namely 5'-deoxyadenosine, S-adenosyl-L-homocysteine, and 5'-methylthioadenosine, to produce the inosine analogs. Can also deaminate adenosine. The preferred substrate for this enzyme is 5'-deoxyadenosine, but all these substrates are efficiently deaminated. Likely functions in a S-adenosyl-L-methionine (SAM) recycling pathway from S-adenosyl-L-homocysteine (SAH) produced from SAM-dependent methylation reactions. May also be involved in the recycling of 5'-deoxyadenosine, whereupon the 5'-deoxyribose moiety of 5'-deoxyinosine is further metabolized to deoxyhexoses used for the biosynthesis of aromatic amino acids in methanogens. The chain is 5'-deoxyadenosine deaminase from Methanosarcina acetivorans (strain ATCC 35395 / DSM 2834 / JCM 12185 / C2A).